The primary structure comprises 315 residues: Indoleacetate decarboxylase activating enzyme (315 aa).

The 291-residue stretch at 21–311 (HDGPGIRTNV…ADIIEAHGVK (291 aa)) folds into the Radical SAM core domain. Residues Cys35, Cys39, Cys42, Cys61, Cys64, Cys67, Cys71, Cys98, Cys101, Cys106, and Cys110 each contribute to the [4Fe-4S] cluster site. 4Fe-4S ferredoxin-type domains follow at residues 52-81 (PQLL…AITD) and 89-120 (GYVH…IAGE). Residues Gly149, 198 to 200 (DCK), and His271 contribute to the S-adenosyl-L-methionine site.

Belongs to the organic radical-activating enzymes family. [4Fe-4S] cluster serves as cofactor.

The enzyme catalyses glycyl-[protein] + reduced [flavodoxin] + S-adenosyl-L-methionine = glycin-2-yl radical-[protein] + semiquinone [flavodoxin] + 5'-deoxyadenosine + L-methionine + H(+). In terms of biological role, catalyzes activation of the indoleacetate decarboxylase OsIAD under anaerobic conditions by generation of an organic free radical on a glycine residue, via a homolytic cleavage of S-adenosyl-L-methionine (SAM). This Tractidigestivibacter scatoligenes (Olsenella scatoligenes) protein is Indoleacetate decarboxylase activating enzyme.